Here is a 97-residue protein sequence, read N- to C-terminus: Large ribosomal subunit protein eL21 (97 aa).

A compositionally biased stretch (polar residues) spans 1–12; it reads MPSSNGPRQATR. The segment at 1-35 is disordered; it reads MPSSNGPRQATRNKLKNDARERGTSPPQRSIEEYD.

Belongs to the eukaryotic ribosomal protein eL21 family.

This Natronomonas pharaonis (strain ATCC 35678 / DSM 2160 / CIP 103997 / JCM 8858 / NBRC 14720 / NCIMB 2260 / Gabara) (Halobacterium pharaonis) protein is Large ribosomal subunit protein eL21.